A 142-amino-acid polypeptide reads, in one-letter code: Transcription antitermination protein NusB (142 aa).

The protein belongs to the NusB family.

Involved in transcription antitermination. Required for transcription of ribosomal RNA (rRNA) genes. Binds specifically to the boxA antiterminator sequence of the ribosomal RNA (rrn) operons. This chain is Transcription antitermination protein NusB, found in Trichlorobacter lovleyi (strain ATCC BAA-1151 / DSM 17278 / SZ) (Geobacter lovleyi).